The chain runs to 373 residues: Caspase-4 (373 aa).

Positions 1–59 (MAENKHPDKPLKVLEQLGKEVLTEYLEKLVQSNVLKLKEEDKQKFNNAERSDKRWVFVD) are required for LPS-binding. Residues 1–80 (MAENKHPDKP…MLLQTFFSVD (80 aa)) constitute a propeptide that is removed on maturation. Residues 1-91 (MAENKHPDKP…GSHHGEANLE (91 aa)) form the CARD domain. S83 carries the phosphoserine modification. Active-site residues include H206 and C254. Residues 267–285 (SSKPQLCRGVDLPRNMEAD) constitute a propeptide that is removed on maturation. A (Microbial infection) ADP-riboxanated arginine modification is found at R310.

The protein belongs to the peptidase C14A family. As to quaternary structure, heterotetramer that consists of two anti-parallel arranged heterodimers, each one formed by a 20 kDa (Caspase-4 subunit p20) and a 10 kDa (Caspase-4 subunit p10) subunit. Upon direct LPS-binding, forms large homooligomers, resulting in its activation. These oligomers are often referred to as 'non-canonical inflammasomes'. In its precursor form, interacts with TMEM214; this interaction is required for association with the endoplasmic reticulum membrane. Interacts with CASP1. Interacts with NOD2. Interacts with Serpinb1a, Serpinb1b and Serpinb1c; these interactions regulate CASP4 activity. In terms of assembly, heterotetramer that consists of two anti-parallel arranged heterodimers, each one formed by a 20 kDa (Caspase-4 subunit p20) and a 10 kDa (Caspase-4 subunit p10) subunit. In response to activation signals, undergoes autoproteolytic cleavage and activation. In terms of processing, (Microbial infection) ADP-riboxanation by S.flexneri OspC3 blocks CASP4 autoprocessing, preventing CASP4 activation and ability to recognize and cleave GSDMD, thereby thwarting the inflammasome/pyroptosis-mediated defense. In terms of tissue distribution, widely expressed, including in thymus, lung and spleen (at protein level). Very low levels, if any, in the brain.

It localises to the cytoplasm. It is found in the cytosol. The protein localises to the endoplasmic reticulum membrane. The protein resides in the mitochondrion. Its subcellular location is the inflammasome. It localises to the secreted. It catalyses the reaction Strict requirement for Asp at the P1 position and has a preferred cleavage sequence of (Ile/Leu/Val/Phe)-Gly-His-Asp-|-.. Activated by homooligomerization induced by direct binding to cytosolic LPS, in a TLR4-independent manner. In addition to LPS, CASP4/CASP11 may also be activated by oxidized phospholipid 1-palmitoyl-2-arachidonoyl- sn-glycero-3-phosphorylcholine, an oxidized phospholipid (oxPAPC), in dendritic cells, promoting adaptive immunity. The role of oxPAPC is however unclear and another report suggests that oxPAPC competes with LPS-binding and inhibits the non-canonical inflammasome in macrophages. Its function is as follows. Inflammatory caspase that acts as the effector of the non-canonical inflammasome by mediating lipopolysaccharide (LPS)-induced pyroptosis. Also indirectly activates the NLRP3 and NLRP6 inflammasomes. Acts as a thiol protease that cleaves a tetrapeptide after an Asp residue at position P1: catalyzes cleavage of CGAS and GSDMD. In contrast to its human ortholog, does not cleave IL18. Effector of the non-canonical inflammasome independently of NLRP3 inflammasome and CASP1: the non-canonical inflammasome promotes pyroptosis through GSDMD cleavage without involving secretion of cytokine IL1B and IL18. In the non-canonical inflammasome, CASP4/CASP11 is activated by direct binding to the lipid A moiety of LPS without the need of an upstream sensor. LPS-binding promotes CASP4/CASP11 activation and CASP4/CASP11-mediated cleavage of GSDMD, followed by pyroptosis of infected cells and their extrusion into the gut lumen. Also indirectly promotes secretion of mature cytokines (IL1A, IL18 and HMGB1) downstream of GSDMD-mediated pyroptosis via activation of the NLRP3 and NLRP6 inflammasomes. Involved in NLRP3-dependent CASP1 activation and IL1B and IL18 secretion in response to non-canonical activators, such as UVB radiation or cholera enterotoxin. Involved in NLRP6 inflammasome-dependent activation in response to lipoteichoic acid (LTA), a cell-wall component of Gram-positive bacteria, which leads to CASP1 activation and IL1B and IL18 secretion. Involved in LPS-induced IL6 secretion; this activity may not require caspase enzymatic activity. The non-canonical inflammasome is required for innate immunity to cytosolic, but not vacuolar, bacteria. Plays a crucial role in the restriction of S.typhimurium replication in colonic epithelial cells during infection. Activation of the non-canonical inflammasome in brain endothelial cells can lead to excessive pyroptosis, leading to blood-brain barrier breakdown. Pyroptosis limits bacterial replication, while cytokine secretion promotes the recruitment and activation of immune cells and triggers mucosal inflammation. May also act as an activator of adaptive immunity in dendritic cells, following activation by oxidized phospholipid 1-palmitoyl-2-arachidonoyl- sn-glycero-3-phosphorylcholine, an oxidized phospholipid (oxPAPC). Cleavage of GSDMD is not strictly dependent on the consensus cleavage site but depends on an exosite interface on CASP4/CASP11 that recognizes and binds the Gasdermin-D, C-terminal (GSDMD-CT) part. In contrast, it does not directly process IL1B. During non-canonical inflammasome activation, cuts CGAS and may play a role in the regulation of antiviral innate immune activation. The sequence is that of Caspase-4 from Mus musculus (Mouse).